The primary structure comprises 103 residues: MAKKSLIQREKKRQKLEQKYHLIRQSLKKKIRSKVSPLSLSEKTKIREQLQSLPRNSAPTRLHRRCFLTGRPRANYRDFGLSGHVLREMVYECLLPGATRSSW.

The protein belongs to the universal ribosomal protein uS14 family. In terms of assembly, part of the 30S ribosomal subunit.

Its subcellular location is the plastid. The protein localises to the chloroplast. Binds 16S rRNA, required for the assembly of 30S particles. The sequence is that of Small ribosomal subunit protein uS14c from Agrostis stolonifera (Creeping bentgrass).